We begin with the raw amino-acid sequence, 95 residues long: MNIRPLQDRVLVRRAEEEKKSAGGIILTGSAQEKPSQGEVVAVGNGKKLDNGTTLPMDVKVGDKVLFGKYSGSEVKVGDETLLMMREEDIMGIIA.

The protein belongs to the GroES chaperonin family. As to quaternary structure, heptamer of 7 subunits arranged in a ring. Interacts with the chaperonin GroEL.

It is found in the cytoplasm. Its function is as follows. Together with the chaperonin GroEL, plays an essential role in assisting protein folding. The GroEL-GroES system forms a nano-cage that allows encapsulation of the non-native substrate proteins and provides a physical environment optimized to promote and accelerate protein folding. GroES binds to the apical surface of the GroEL ring, thereby capping the opening of the GroEL channel. This is Co-chaperonin GroES from Francisella tularensis subsp. tularensis (strain FSC 198).